Consider the following 78-residue polypeptide: uncharacterized protein (78 aa).

In terms of biological role, this protein may be involved in virus assembly. Essential for virus function. This is an uncharacterized protein from Sulfolobus spindle-shape virus 1 (SSV1).